The sequence spans 343 residues: Dihydroorotase (343 aa).

Residues H14 and H16 each coordinate Zn(2+). Substrate-binding positions include 16-18 and N42; that span reads HLR. Zn(2+)-binding residues include K97, H136, H170, and D242. An N6-carboxylysine modification is found at K97. Position 136 (H136) interacts with substrate. D242 is an active-site residue. Substrate-binding residues include H246 and A258.

It belongs to the metallo-dependent hydrolases superfamily. DHOase family. Class II DHOase subfamily. Homodimer. The cofactor is Zn(2+).

It carries out the reaction (S)-dihydroorotate + H2O = N-carbamoyl-L-aspartate + H(+). It participates in pyrimidine metabolism; UMP biosynthesis via de novo pathway; (S)-dihydroorotate from bicarbonate: step 3/3. In terms of biological role, catalyzes the reversible cyclization of carbamoyl aspartate to dihydroorotate. The polypeptide is Dihydroorotase (Helicobacter hepaticus (strain ATCC 51449 / 3B1)).